A 494-amino-acid chain; its full sequence is V-type proton ATPase subunit B (494 aa).

Arginine 384 contributes to the ATP binding site.

It belongs to the ATPase alpha/beta chains family. In terms of assembly, V-ATPase is a heteromultimeric enzyme made up of two complexes: the ATP-hydrolytic V1 complex and the proton translocation V0 complex. The V1 complex consists of three catalytic AB heterodimers that form a heterohexamer, three peripheral stalks each consisting of EG heterodimers, one central rotor including subunits D and F, and the regulatory subunits C and H. The proton translocation complex V0 consists of the proton transport subunit a, a ring of proteolipid subunits c9c'', rotary subunit d, subunits e and f, and the accessory subunits VhaAC45 and ATP6AP2.

Its function is as follows. Non-catalytic subunit of the V1 complex of vacuolar(H+)-ATPase (V-ATPase), a multisubunit enzyme composed of a peripheral complex (V1) that hydrolyzes ATP and a membrane integral complex (V0) that translocates protons. V-ATPase is responsible for acidifying and maintaining the pH of intracellular compartments and in some cell types, is targeted to the plasma membrane, where it is responsible for acidifying the extracellular environment. Essential for the proper assembly and activity of V-ATPase. This is V-type proton ATPase subunit B (VHA55) from Heliothis virescens (Tobacco budworm moth).